Reading from the N-terminus, the 1022-residue chain is Leucine--tRNA ligase (1022 aa).

The 'HIGH' region signature appears at 47–57 (PYPNSPMHLGH). Positions 697–701 (KMSKS) match the 'KMSKS' region motif. Lysine 700 contributes to the ATP binding site.

This sequence belongs to the class-I aminoacyl-tRNA synthetase family.

It localises to the cytoplasm. The enzyme catalyses tRNA(Leu) + L-leucine + ATP = L-leucyl-tRNA(Leu) + AMP + diphosphate. The polypeptide is Leucine--tRNA ligase (Ignicoccus hospitalis (strain KIN4/I / DSM 18386 / JCM 14125)).